The primary structure comprises 585 residues: Protein-lysine N-methyltransferase EFM1 (585 aa).

The region spanning 23–281 (PKISFRITED…AQDELFNNYG (259 aa)) is the SET domain. S-adenosyl-L-methionine is bound at residue Tyr280.

It belongs to the class V-like SAM-binding methyltransferase superfamily. RKM1 family.

Its subcellular location is the cytoplasm. Its function is as follows. S-adenosyl-L-methionine-dependent protein-lysine N-methyltransferase that monomethylates elongation factor 1-alpha (TEF1/TEF2) at 'Lys-30'. The sequence is that of Protein-lysine N-methyltransferase EFM1 from Saccharomyces cerevisiae (strain ATCC 204508 / S288c) (Baker's yeast).